A 500-amino-acid polypeptide reads, in one-letter code: Lysine--tRNA ligase (500 aa).

Mg(2+) is bound by residues glutamate 410 and glutamate 417.

This sequence belongs to the class-II aminoacyl-tRNA synthetase family. As to quaternary structure, homodimer. It depends on Mg(2+) as a cofactor.

The protein resides in the cytoplasm. The catalysed reaction is tRNA(Lys) + L-lysine + ATP = L-lysyl-tRNA(Lys) + AMP + diphosphate. This Shewanella piezotolerans (strain WP3 / JCM 13877) protein is Lysine--tRNA ligase.